Reading from the N-terminus, the 185-residue chain is HTH-type transcriptional regulator SACOL2593 (185 aa).

One can recognise an HTH tetR-type domain in the interval 6-66 (KENRQRIEEI…YVIQRDLDIF (61 aa)). Residues 29-48 (SMNRIAKELGIGMGTLYRHF) constitute a DNA-binding region (H-T-H motif).

In Staphylococcus aureus (strain COL), this protein is HTH-type transcriptional regulator SACOL2593.